The chain runs to 483 residues: MGFTLAIVGRPNVGKSTLFNRLVGRKLALVDDLPGVTRDRRIHDAKLYDLKFQLIDTAGLEEAANDSLEARMRAQTEAAISEADAVLFVIDAKAGITPADSTFAEAVRRSGKPVVLVANKAEARGSEAGMYDAFQLGLGEPCPISAEHGQGMPDLRDAIVELLGEERVFAEERQEEAADEVFTPAAVGALVGDDIEDPDAEEIPAYDATKPLRIAIVGRPNAGKSTLINTMLGEDRLLTGPEAGITRDSISADWEWHGRKIKLFDTAGMRRKARVQEKLEKLSVADGLRAIRFAEVVIIVLDATIPFEKQDLQIADLIIREGRAPVIAFNKWDLIEDRQMVLADLYEKTARLLPQVRGLRAVPISGERGQGIDKLMENVVKTHEIWNRRISTGRLNRWLEGVIAHQPPPAVSGRRLKVKYMTQVKTRPPGFVVSCSRPDAMPQSYVRYLINGLRETFDMPGVPIRLSLRTSDNPFAGRAKKKK.

2 EngA-type G domains span residues 3–167 and 212–387; these read FTLA…GEER and LRIA…EIWN. GTP is bound by residues 9-16, 56-60, 119-122, 218-225, 265-269, and 330-333; these read GRPNVGKS, DTAGL, NKAE, GRPNAGKS, DTAGM, and NKWD. A KH-like domain is found at 388-472; it reads RRISTGRLNR…PIRLSLRTSD (85 aa).

This sequence belongs to the TRAFAC class TrmE-Era-EngA-EngB-Septin-like GTPase superfamily. EngA (Der) GTPase family. In terms of assembly, associates with the 50S ribosomal subunit.

Its function is as follows. GTPase that plays an essential role in the late steps of ribosome biogenesis. The sequence is that of GTPase Der from Brucella suis (strain ATCC 23445 / NCTC 10510).